Reading from the N-terminus, the 873-residue chain is Sine oculis-binding protein homolog (873 aa).

Positions 1–14 are enriched in basic and acidic residues; the sequence is MAEMEKEGRPPENK. The tract at residues 1-26 is disordered; it reads MAEMEKEGRPPENKRSRKPAHPVKRE. FCS-type zinc fingers lie at residues 142 to 180 and 216 to 256; these read DDVSNVQIMCAWCQKVGIKRYSLSMGSEVKCFCSEKCFA and FKNN…KCLN. Disordered regions lie at residues 307–338, 413–485, 550–608, 742–766, and 779–811; these read ARRKAPSPASAAGQIQGPGPSASTTASPSDTA, RGPP…GAPL, KPPS…NQAQ, STEGSKNPEPPQDPKKPQPPEELAV, and SNCHLEGDTGKKAGEEPLAGGDKQDPNLNNPAD. Residues 312–338 show a composition bias toward low complexity; it reads PSPASAAGQIQGPGPSASTTASPSDTA. Positions 460–485 are enriched in pro residues; the sequence is IHPPTTPTMPGNPPGLLPPPPPGAPL. Residues 554-570 show a composition bias toward polar residues; it reads GFSSNGENFIPSNSSET. The span at 571–603 shows a compositional bias: low complexity; that stretch reads PGGKPPNSSSSPRESKQGSSKPSDSSPSCSGQS. The span at 783–793 shows a compositional bias: basic and acidic residues; that stretch reads LEGDTGKKAGE.

Belongs to the SOBP family.

Functionally, implicated in development of the cochlea. This Gallus gallus (Chicken) protein is Sine oculis-binding protein homolog.